Consider the following 129-residue polypeptide: Glycine cleavage system H protein (129 aa).

One can recognise a Lipoyl-binding domain in the interval H24 to A106. Position 65 is an N6-lipoyllysine (K65).

Belongs to the GcvH family. As to quaternary structure, the glycine cleavage system is composed of four proteins: P, T, L and H. The cofactor is (R)-lipoate.

The glycine cleavage system catalyzes the degradation of glycine. The H protein shuttles the methylamine group of glycine from the P protein to the T protein. The chain is Glycine cleavage system H protein from Hydrogenovibrio crunogenus (strain DSM 25203 / XCL-2) (Thiomicrospira crunogena).